The following is a 248-amino-acid chain: 5'-nucleotidase SurE (248 aa).

4 residues coordinate a divalent metal cation: Asp8, Asp9, Ser39, and Asn91.

The protein belongs to the SurE nucleotidase family. It depends on a divalent metal cation as a cofactor.

The protein localises to the cytoplasm. It catalyses the reaction a ribonucleoside 5'-phosphate + H2O = a ribonucleoside + phosphate. Its function is as follows. Nucleotidase that shows phosphatase activity on nucleoside 5'-monophosphates. In Geotalea uraniireducens (strain Rf4) (Geobacter uraniireducens), this protein is 5'-nucleotidase SurE.